A 311-amino-acid polypeptide reads, in one-letter code: Apulose-4-phosphate transketolase subunit B (311 aa).

Belongs to the transketolase family. Probable heterodimer composed of AptA and AptB. Thiamine diphosphate is required as a cofactor.

It catalyses the reaction apulose 4-phosphate + D-glyceraldehyde 3-phosphate = D-xylulose 5-phosphate + dihydroxyacetone phosphate. It functions in the pathway carbohydrate metabolism. Its function is as follows. Involved in catabolism of D-apiose. Catalyzes the transfer of the glycolaldehyde group from apulose-4-phosphate to D-glyceraldehyde 3-phosphate, generating dihydroxyacetone phosphate and D-xylulose-5-phosphate. The protein is Apulose-4-phosphate transketolase subunit B of Actinobacillus succinogenes (strain ATCC 55618 / DSM 22257 / CCUG 43843 / 130Z).